Here is a 297-residue protein sequence, read N- to C-terminus: N-acetylmuramic acid 6-phosphate etherase (297 aa).

Residues 55 to 218 form the SIS domain; sequence AAAALKSGGR…STGAMVKFGK (164 aa). Residue Glu-83 is the Proton donor of the active site. Glu-114 is a catalytic residue.

The protein belongs to the GCKR-like family. MurNAc-6-P etherase subfamily. As to quaternary structure, homodimer.

The catalysed reaction is N-acetyl-D-muramate 6-phosphate + H2O = N-acetyl-D-glucosamine 6-phosphate + (R)-lactate. It participates in amino-sugar metabolism; 1,6-anhydro-N-acetylmuramate degradation. The protein operates within amino-sugar metabolism; N-acetylmuramate degradation. Its pathway is cell wall biogenesis; peptidoglycan recycling. Specifically catalyzes the cleavage of the D-lactyl ether substituent of MurNAc 6-phosphate, producing GlcNAc 6-phosphate and D-lactate. Together with AnmK, is also required for the utilization of anhydro-N-acetylmuramic acid (anhMurNAc) either imported from the medium or derived from its own cell wall murein, and thus plays a role in cell wall recycling. This chain is N-acetylmuramic acid 6-phosphate etherase, found in Salmonella agona (strain SL483).